A 504-amino-acid chain; its full sequence is Lysine--tRNA ligase (504 aa).

Positions 23-31 (PSGPIHIGN) match the 'HIGH' region motif.

It belongs to the class-I aminoacyl-tRNA synthetase family.

Its subcellular location is the cytoplasm. The enzyme catalyses tRNA(Lys) + L-lysine + ATP = L-lysyl-tRNA(Lys) + AMP + diphosphate. The sequence is that of Lysine--tRNA ligase from Picrophilus torridus (strain ATCC 700027 / DSM 9790 / JCM 10055 / NBRC 100828 / KAW 2/3).